The following is a 175-amino-acid chain: Colicin-B immunity protein (175 aa).

3 helical membrane-spanning segments follow: residues 14 to 32 (ILYA…ILIL), 104 to 121 (CFWG…TLFY), and 149 to 168 (IYFT…LLVI).

It is found in the cell inner membrane. In terms of biological role, this protein is able to protect a cell, which harbors the plasmid ColB encoding colicin B, against colicin B. This is Colicin-B immunity protein (cbi) from Escherichia coli.